A 583-amino-acid chain; its full sequence is Protein FMP25, mitochondrial (583 aa).

Residues 1–25 constitute a mitochondrion transit peptide; sequence MSFRLFTRTSQRLPRLNWVSPIRRY. The helical transmembrane segment at 83–105 threads the bilayer; sequence AVGQGILILVVVGGLGTAYLRWP. RCC1 repeat units follow at residues 332-389, 390-452, 459-510, and 512-569; these read KGQF…AIDK, TGEI…VTIR, DHHY…TETE, and ENEV…KEQR.

The protein resides in the mitochondrion membrane. The polypeptide is Protein FMP25, mitochondrial (FMP25) (Saccharomyces cerevisiae (strain ATCC 204508 / S288c) (Baker's yeast)).